We begin with the raw amino-acid sequence, 211 residues long: 2,3-bisphosphoglycerate-dependent phosphoglycerate mutase (211 aa).

Residues 9–16 (RHGQSDWN), 22–23 (TG), Arg-61, 88–91 (ERDY), Lys-99, 115–116 (RR), and 159–160 (GN) each bind substrate. The active-site Tele-phosphohistidine intermediate is His-10. The active-site Proton donor/acceptor is Glu-88.

The protein belongs to the phosphoglycerate mutase family. BPG-dependent PGAM subfamily. As to quaternary structure, homodimer.

The enzyme catalyses (2R)-2-phosphoglycerate = (2R)-3-phosphoglycerate. The protein operates within carbohydrate degradation; glycolysis; pyruvate from D-glyceraldehyde 3-phosphate: step 3/5. In terms of biological role, catalyzes the interconversion of 2-phosphoglycerate and 3-phosphoglycerate. In Rhizobium meliloti (strain 1021) (Ensifer meliloti), this protein is 2,3-bisphosphoglycerate-dependent phosphoglycerate mutase.